The chain runs to 409 residues: Elongation factor Tu (409 aa).

One can recognise a tr-type G domain in the interval 10–214 (KPHVNVGTIG…AVDSYIPTPE (205 aa)). The segment at 19 to 26 (GHVDHGKT) is G1. Residue 19 to 26 (GHVDHGKT) coordinates GTP. Thr26 is a Mg(2+) binding site. Positions 60-64 (GITIN) are G2. The tract at residues 81-84 (DCPG) is G3. GTP-binding positions include 81-85 (DCPGH) and 136-139 (NKVD). Residues 136 to 139 (NKVD) are G4. Residues 174 to 176 (SAL) form a G5 region.

It belongs to the TRAFAC class translation factor GTPase superfamily. Classic translation factor GTPase family. EF-Tu/EF-1A subfamily. In terms of assembly, monomer.

Its subcellular location is the cytoplasm. It carries out the reaction GTP + H2O = GDP + phosphate + H(+). Functionally, GTP hydrolase that promotes the GTP-dependent binding of aminoacyl-tRNA to the A-site of ribosomes during protein biosynthesis. In Synechococcus sp. (strain JA-3-3Ab) (Cyanobacteria bacterium Yellowstone A-Prime), this protein is Elongation factor Tu.